A 251-amino-acid polypeptide reads, in one-letter code: Diphthine synthase (251 aa).

S-adenosyl-L-methionine-binding positions include D83, L86, 111–112 (SI), L163, and L205.

Belongs to the diphthine synthase family. As to quaternary structure, homodimer.

It catalyses the reaction 2-[(3S)-amino-3-carboxypropyl]-L-histidyl-[translation elongation factor 2] + 3 S-adenosyl-L-methionine = diphthine-[translation elongation factor 2] + 3 S-adenosyl-L-homocysteine + 3 H(+). The protein operates within protein modification; peptidyl-diphthamide biosynthesis. In terms of biological role, S-adenosyl-L-methionine-dependent methyltransferase that catalyzes the trimethylation of the amino group of the modified target histidine residue in translation elongation factor 2 (EF-2), to form an intermediate called diphthine. The three successive methylation reactions represent the second step of diphthamide biosynthesis. The chain is Diphthine synthase from Pyrobaculum calidifontis (strain DSM 21063 / JCM 11548 / VA1).